Reading from the N-terminus, the 329-residue chain is NAD(+) hydrolase TcpA (329 aa).

The MPN domain maps to 5-134 (VSISYLALEQ…ADCVRFYTVR (130 aa)). One can recognise a TIR domain in the interval 192-324 (FEYDVFICHA…YVVNEILRVL (133 aa)). Residues 201–202 (AH) and serine 231 each bind NAD(+). Glutamate 267 is an active-site residue.

The catalysed reaction is NAD(+) + H2O = ADP-D-ribose + nicotinamide + H(+). NAD(+) hydrolase (NADase) that catalyzes cleavage of NAD(+) into ADP-D-ribose (ADPR) and nicotinamide. This chain is NAD(+) hydrolase TcpA, found in Theionarchaea archaeon (strain DG-70-1).